Here is a 449-residue protein sequence, read N- to C-terminus: MSHKSCYTNPGTGGKRPRNDKGNKVTVVLGAQWGDEGKGKVVDLLATESDIICRCQGGNNAGHTVVVDGMEYDFHLLPSGIINSKAVSVIGNGVVIHLPGLLEEAEKNEKKGLKDWEKRLIISDRAHIVFDFHQAVDGLQEVQRQAQDGKNIGTTKKGIGPTYSSKASRTGLRICDLLDDFKEFSTRFKNLAQQYQAMFPTLVVDVEGQLKKLKEYAERIRPMVRDGVYFMYDAINGPPKKILVEGANAALLDIDFGTYPFVTSSNCTVGGVCTGLGIPPLNIGDVYGVVKAYTTRVGIGAFPTEQLNEVGELLQTRGHEVGVTTGRKRRCGWLDLVILRYANMINGFTAFALTKLDILDVMDEIKVGVSYKLKGKKIPYFPANMDVLQKVEVEYEKLPGWKSDTSACRKWEDLPVKAQNYVRFVENHVGVPIKWVGVGKARESMIQMF.

Residues Met1 to Pro10 are compositionally biased toward polar residues. Positions Met1 to Gly22 are disordered. Residues Gly34–Lys40 and Gly62–Thr64 contribute to the GTP site. The active-site Proton acceptor is the Asp35. 2 residues coordinate Mg(2+): Asp35 and Gly62. Asp35 provides a ligand contact to substrate. IMP is bound by residues Asp35–Lys38, Asn60–His63, Thr155, Arg169, Asn248, Thr263, and Arg327. Catalysis depends on His63, which acts as the Proton donor. Residue Val323–Arg329 coordinates substrate. Residues Arg329, Lys355–Asp357, and Gly437–Lys440 contribute to the GTP site.

It belongs to the adenylosuccinate synthetase family. As to quaternary structure, homodimer. The cofactor is Mg(2+).

Its subcellular location is the cytoplasm. The enzyme catalyses IMP + L-aspartate + GTP = N(6)-(1,2-dicarboxyethyl)-AMP + GDP + phosphate + 2 H(+). Its pathway is purine metabolism; AMP biosynthesis via de novo pathway; AMP from IMP: step 1/2. Component of the purine nucleotide cycle (PNC), which interconverts IMP and AMP to regulate the nucleotide levels in various tissues, and which contributes to glycolysis and ammoniagenesis. Catalyzes the first committed step in the biosynthesis of AMP from IMP. The protein is Adenylosuccinate synthetase isozyme 1 A (adss1a) of Salmo salar (Atlantic salmon).